A 194-amino-acid polypeptide reads, in one-letter code: CD-NTase-associated protein 15 (194 aa).

Residues 1 to 73 (MRMWELLPSK…DYLKHKFCPD (73 aa)) are required for cell toxicity. Helical transmembrane passes span 15-35 (ISTIISIIVFLFFLEFLGQPV) and 43-63 (ITTITILAFIFGKYLWKYFYI).

Belongs to the CBASS Cap15 membrane effector family. As to quaternary structure, the beta barrel domain oligomerizes; in the presence of cyclic nucleotides (probably 3',3'-cGAMP, but the cognate CD-NTase makes at least 4 other cyclic nucleotides) higher-level oligomers are detected.

It is found in the cell inner membrane. In terms of biological role, effector protein of a CBASS antivirus system. CBASS (cyclic oligonucleotide-based antiphage signaling system) provides immunity against bacteriophages. The CD-NTase protein (CdnB) synthesizes cyclic nucleotides in response to infection; these serve as specific second messenger signals. The signals activate a diverse range of effectors, leading to bacterial cell death and thus abortive phage infection. Causes cell death in response to 3',3'-cGAMP upon coexpression in E.coli with V.cholerae DncV; inactivating DncV prevents cell death. Upon induction in E.coli with non-cognate DncV, the cell inner membrane shrinks and separates from the cell wall with a concomitant increase in the periplasm. Binds cyclic nucleotide second messenger 3',3'-cGAMP, probably oligomerizing, and induces cell membrane shrinkage and rupture, leading to cell death. A type I CBASS system. Its function is as follows. Protects E.coli against phage infection. When the CBASS operon (cdnB-cap15) is introduced in E.coli MG1655 there is about 100-fold protection against phage T2 and about 10-fold protection against phage T5 and T6. The protein is CD-NTase-associated protein 15 of Escherichia albertii.